The following is a 500-amino-acid chain: Lysine--tRNA ligase (500 aa).

The Mg(2+) site is built by E410 and E417.

The protein belongs to the class-II aminoacyl-tRNA synthetase family. In terms of assembly, homodimer. Requires Mg(2+) as cofactor.

The protein resides in the cytoplasm. The enzyme catalyses tRNA(Lys) + L-lysine + ATP = L-lysyl-tRNA(Lys) + AMP + diphosphate. This Shewanella sediminis (strain HAW-EB3) protein is Lysine--tRNA ligase.